We begin with the raw amino-acid sequence, 570 residues long: MFS-type transporter pigP (570 aa).

Residues 14–54 (GMIKKAHPEQTPPDVSHEGDVATEKGDSDGVEQAAPTGPTD) are disordered. Residues 28 to 41 (VSHEGDVATEKGDS) show a composition bias toward basic and acidic residues. A run of 7 helical transmembrane segments spans residues 65–85 (VMIM…TSII), 99–119 (LPDV…LVPL), 131–151 (WSFV…GVAT), 162–182 (VAGM…AGCV), 192–212 (GLLM…GGAF), 221–241 (CFYI…FVHI), and 263–283 (LVGF…LQYG). An N-linked (GlcNAc...) asparagine glycan is attached at N290. Helical transmembrane passes span 293-313 (VVIG…LWEW), 336-356 (VVYG…PIYF), 369-389 (VYIL…GALV), 392-412 (FGYY…GNGL), 425-445 (WIGY…MPII), 455-475 (LIPV…STFL), and 533-553 (VFYL…GMGW).

It belongs to the major facilitator superfamily. TCR/Tet family.

The protein localises to the cell membrane. In terms of biological role, MFS-type transporter; part of the gene cluster that mediates the biosynthesis of azaphilone pigments (MonAzPs), very widely used as food colorant. This chain is MFS-type transporter pigP, found in Monascus ruber (Mold).